We begin with the raw amino-acid sequence, 631 residues long: Bromodomain-containing protein 9 (631 aa).

2 disordered regions span residues 1 to 26 (MGKKHKKYRPEWRAVEGDYEDKPLEK) and 39 to 116 (VTEL…TLPK). 2 stretches are compositionally biased toward basic and acidic residues: residues 9-26 (RPEWRAVEGDYEDKPLEK) and 50-63 (SYYDDRSDHEWERH). Residues 64-73 (KEKKKKKKKK) show a composition bias toward basic residues. Residues 74-85 (SEKEKYADDDER) show a composition bias toward basic and acidic residues. The segment covering 86–96 (RRRKEEKKKKR) has biased composition (basic residues). Residues 166-270 (NEATPHQQLL…HTGFKMMSKQ (105 aa)) enclose the Bromo domain. The histone H4K5ac H4K8ac and histone H4K5bu H4K8bu binding stretch occupies residues 244–246 (VYN). The interval 571–631 (ASVDRVGSRP…SPEPGSTANS (61 aa)) is disordered. A compositionally biased stretch (low complexity) spans 581-590 (SSNLSSLSNA).

Binds acetylated histones H3 and H4. Binds butyrylated histone H4.

It localises to the nucleus. Plays a role in chromatin remodeling and regulation of transcription. Acts as a chromatin reader that recognizes and binds acylated histones: binds histones that are acetylated and/or butyrylated. The sequence is that of Bromodomain-containing protein 9 (brd9) from Danio rerio (Zebrafish).